We begin with the raw amino-acid sequence, 227 residues long: GTP:AMP phosphotransferase AK3, mitochondrial (227 aa).

GTP contacts are provided by Gly17, Gly19, Lys20, Gly21, and Thr22. Lys20 is subject to N6-succinyllysine. N6-acetyllysine is present on Lys34. At Ser37 the chain carries Phosphoserine. The NMP stretch occupies residues 37–66 (SSGDLLRDNMLRGTEIGVLAKAFIDQGKLI). 2 residues coordinate AMP: Ser38 and Arg43. An N6-succinyllysine modification is found at Lys57. Lys64 lines the AMP pocket. Lys64 and Lys80 each carry N6-acetyllysine; alternate. N6-succinyllysine; alternate occurs at positions 64 and 80. Residues Gly91, Arg94, and Gln98 each contribute to the AMP site. The segment at 127-164 (ARWIHPASGRVYNIEFNPPKTVGIDDLTGEPLIQREDD) is LID. GTP-binding residues include Arg128, Tyr138, Asn139, Arg161, and Arg172. Lys174 and Lys189 each carry N6-acetyllysine; alternate. 2 positions are modified to N6-succinyllysine; alternate: Lys174 and Lys189. Residue Thr201 participates in GTP binding. At Lys203 the chain carries N6-acetyllysine.

Belongs to the adenylate kinase family. AK3 subfamily. Monomer. In terms of tissue distribution, highly expressed in heart, skeletal muscle and liver, moderately expressed in pancreas and kidney, and weakly expressed in placenta, brain and lung.

It is found in the mitochondrion matrix. It catalyses the reaction a ribonucleoside 5'-triphosphate + AMP = a ribonucleoside 5'-diphosphate + ADP. The catalysed reaction is GTP + AMP = GDP + ADP. The enzyme catalyses ITP + AMP = IDP + ADP. Inhibited by ATP. In terms of biological role, mitochondrial adenylate kinase with a specific GTP:AMP phosphotransferase activity. Could also use ITP as phosphate donor. Its physiological function is to recycle GTP into GDP which is necessary for the TCA cycle in the mitochondrial matrix. In Homo sapiens (Human), this protein is GTP:AMP phosphotransferase AK3, mitochondrial.